A 238-amino-acid chain; its full sequence is Tetraspanin-4 (238 aa).

At 1–13 (MARACLQAVKYLM) the chain is on the cytoplasmic side. A helical membrane pass occupies residues 14 to 34 (FAFNLLFWLGGCGVLGVGIWL). Residues 35 to 55 (AATQGSFATLSSSFPSLSAAN) lie on the Extracellular side of the membrane. Residues 56–76 (LLIITGAFVMAIGFVGCLGAI) traverse the membrane as a helical segment. Topologically, residues 77-85 (KENKCLLLT) are cytoplasmic. Residues 86–106 (FFLLLLLVFLLEATIAILFFA) traverse the membrane as a helical segment. The Extracellular portion of the chain corresponds to 107 to 201 (YTDKIDRYAQ…ETVKVWLQEN (95 aa)). Asn-152 and Asn-161 each carry an N-linked (GlcNAc...) asparagine glycan. Residues 202–222 (LLAVGIFGLCTALVQILGLTF) form a helical membrane-spanning segment. Residues 223–238 (AMTMYCQVVKADTYCA) are Cytoplasmic-facing.

The protein belongs to the tetraspanin (TM4SF) family. In terms of assembly, forms a complex with integrins. Interacts with HRH4. In terms of tissue distribution, expressed in multiple tissues but is absent in brain, lymphoid cells, and platelets.

It localises to the cell membrane. Structural component of specialized membrane microdomains known as tetraspanin-enriched microdomains (TERMs), which act as platforms for receptor clustering and signaling. Plays an essential role in migrasome formation and migration on retracting fibers at the rear end of migrating cells. Migrasomes are cellular organelles that form as large vesicle-like structures on retraction fibers of migrating cells. Mechanistically, acts as a membrane curvature sensor and participates in stabilizing the migrasome structure in a late stage of biogenesis. May also play a regulatory role for the histamine H4 receptor/HRH4 without affecting histamine binding to HRH4 or signaling. The sequence is that of Tetraspanin-4 (TSPAN4) from Homo sapiens (Human).